A 367-amino-acid chain; its full sequence is Probable sugar phosphate/phosphate translocator At1g48230 (367 aa).

The next 10 membrane-spanning stretches (helical) occupy residues 9-29, 43-63, 76-96, 106-126, 140-160, 163-183, 193-213, 229-249, 257-276, and 280-302; these read LVLT…VILY, LPIT…FLLI, FEIY…SLWF, VAFI…MAVV, MVLV…FNVI, VYQV…QVLL, VTSL…PWYV, WIFF…FLVI, IRVA…TVIF, and TITG…YNYI. The segment covering 321 to 330 has biased composition (basic and acidic residues); the sequence is ITKDWKEKNS. Residues 321–341 are disordered; it reads ITKDWKEKNSSDGGSPRGLEL.

The protein belongs to the TPT transporter family. TPT (TC 2.A.7.9) subfamily.

It is found in the membrane. The protein is Probable sugar phosphate/phosphate translocator At1g48230 of Arabidopsis thaliana (Mouse-ear cress).